The sequence spans 199 residues: Putative peroxiredoxin ycf42 (199 aa).

In terms of domain architecture, Thioredoxin spans 8–165 (LQVGQIAPDF…TLRVLQAIQY (158 aa)). Cys53 serves as the catalytic Cysteine sulfenic acid (-SOH) intermediate.

It belongs to the peroxiredoxin family. AhpC/Prx1 subfamily. Homodimer; disulfide-linked, upon oxidation. Post-translationally, the Cys-53-SH group is the primary site of oxidation by H(2)O(2), and the oxidized Cys-53 (probably Cys-SOH) rapidly reacts with Cys-174-SH of the other subunit to form an intermolecular disulfide. This disulfide is subsequently reduced by thioredoxin.

The protein resides in the plastid. It is found in the chloroplast. The catalysed reaction is a hydroperoxide + [thioredoxin]-dithiol = an alcohol + [thioredoxin]-disulfide + H2O. In terms of biological role, thiol-specific peroxidase that catalyzes the reduction of hydrogen peroxide and organic hydroperoxides to water and alcohols, respectively. Plays a role in cell protection against oxidative stress by detoxifying peroxides. The protein is Putative peroxiredoxin ycf42 (ycf42) of Porphyra purpurea (Red seaweed).